Consider the following 572-residue polypeptide: Phosphoenolpyruvate-protein phosphotransferase (572 aa).

Catalysis depends on His190, which acts as the Tele-phosphohistidine intermediate. Residues Arg297 and Arg333 each coordinate phosphoenolpyruvate. The Mg(2+) site is built by Glu427 and Asp451. Phosphoenolpyruvate contacts are provided by residues 450 to 451 (ND) and Arg461. The Proton donor role is filled by Cys498.

It belongs to the PEP-utilizing enzyme family. In terms of assembly, homodimer. The cofactor is Mg(2+).

It localises to the cytoplasm. The enzyme catalyses L-histidyl-[protein] + phosphoenolpyruvate = N(pros)-phospho-L-histidyl-[protein] + pyruvate. In terms of biological role, general (non sugar-specific) component of the phosphoenolpyruvate-dependent sugar phosphotransferase system (sugar PTS). This major carbohydrate active-transport system catalyzes the phosphorylation of incoming sugar substrates concomitantly with their translocation across the cell membrane. Enzyme I transfers the phosphoryl group from phosphoenolpyruvate (PEP) to the phosphoryl carrier protein (HPr). The chain is Phosphoenolpyruvate-protein phosphotransferase (ptsI) from Mycoplasma genitalium (strain ATCC 33530 / DSM 19775 / NCTC 10195 / G37) (Mycoplasmoides genitalium).